Consider the following 63-residue polypeptide: Beta-defensin 4 (63 aa).

The first 22 residues, 1 to 22 (MRIHYLLFSFLLVLLSPLSAFT), serve as a signal peptide directing secretion. Gln23 carries the pyrrolidone carboxylic acid modification. Disulfide bonds link Cys31-Cys59, Cys38-Cys52, and Cys42-Cys60.

It belongs to the beta-defensin family. As to expression, highly expressed in lung.

It is found in the secreted. Functionally, exhibits antimicrobial activity against Gram-negative bacteria and Gram-positive bacteria. May act as a ligand for C-C chemokine receptor CCR6. Binds to CCR6 and induces chemotactic activity of CCR6-expressing cells. The chain is Beta-defensin 4 (Defb4) from Rattus norvegicus (Rat).